The chain runs to 685 residues: ATP-dependent permease MDL1 (685 aa).

The segment covering 48–70 (FNSKSSTAPNTEANSNGSTNSQS) has biased composition (polar residues). Residues 48–76 (FNSKSSTAPNTEANSNGSTNSQSDTKKPR) form a disordered region. The N-linked (GlcNAc...) asparagine glycan is linked to asparagine 63. The chain crosses the membrane as a helical span at residues 96–116 (LIFFALICLVTTSATSMALPL). An ABC transmembrane type-1 domain is found at 97–407 (IFFALICLVT…LGNFYTELMK (311 aa)). The segment at 125 to 147 (TKKDDDDDKDNDNDDKDDTQPSD) is disordered. Acidic residues predominate over residues 129-141 (DDDDKDNDNDDKD). The helical transmembrane segment at 158 to 180 (FYSALGVLFIVSASTNFGRIYLL) threads the bilayer. Asparagine 239 carries N-linked (GlcNAc...) asparagine glycosylation. A helical transmembrane segment spans residues 266-282 (LCMSLIFPPLITMSWFY). Asparagine 336 carries an N-linked (GlcNAc...) asparagine glycan. The next 2 membrane-spanning stretches (helical) occupy residues 353-373 (GFIGNVTMIGLLIMGTKLIGA) and 381-401 (LSSFMMYAVYTGTSVFGLGNF). The 241-residue stretch at 440-680 (IEFKGIDFTY…PNSQFNKLLK (241 aa)) folds into the ABC transporter domain. 475–482 (GPSGSGKS) is an ATP binding site. N-linked (GlcNAc...) asparagine glycans are attached at residues asparagine 553 and asparagine 576.

It belongs to the ABC transporter superfamily. ABCB family. Mitochondrial peptide exporter (TC 3.A.1.212) subfamily.

It is found in the membrane. This Candida albicans (Yeast) protein is ATP-dependent permease MDL1 (MDL1).